Consider the following 914-residue polypeptide: Isoleucine--tRNA ligase (914 aa).

The 'HIGH' region signature appears at 64–74 (PYANGNFHLGH). L-isoleucyl-5'-AMP is bound at residue glutamate 557. The 'KMSKS' region motif lies at 598–602 (PMSKS). Residue lysine 601 coordinates ATP. Zn(2+) is bound by residues cysteine 889, cysteine 892, cysteine 906, and cysteine 909.

This sequence belongs to the class-I aminoacyl-tRNA synthetase family. IleS type 1 subfamily. In terms of assembly, monomer. Zn(2+) is required as a cofactor.

It is found in the cytoplasm. The enzyme catalyses tRNA(Ile) + L-isoleucine + ATP = L-isoleucyl-tRNA(Ile) + AMP + diphosphate. Functionally, catalyzes the attachment of isoleucine to tRNA(Ile). As IleRS can inadvertently accommodate and process structurally similar amino acids such as valine, to avoid such errors it has two additional distinct tRNA(Ile)-dependent editing activities. One activity is designated as 'pretransfer' editing and involves the hydrolysis of activated Val-AMP. The other activity is designated 'posttransfer' editing and involves deacylation of mischarged Val-tRNA(Ile). This chain is Isoleucine--tRNA ligase, found in Leptospira interrogans serogroup Icterohaemorrhagiae serovar Lai (strain 56601).